Here is a 342-residue protein sequence, read N- to C-terminus: UDP-N-acetylglucosamine--N-acetylmuramyl-(pentapeptide) pyrophosphoryl-undecaprenol N-acetylglucosamine transferase (342 aa).

UDP-N-acetyl-alpha-D-glucosamine contacts are provided by residues 10–12 (TGG), asparagine 124, serine 177, and glutamine 275.

The protein belongs to the glycosyltransferase 28 family. MurG subfamily.

Its subcellular location is the cell inner membrane. The catalysed reaction is di-trans,octa-cis-undecaprenyl diphospho-N-acetyl-alpha-D-muramoyl-L-alanyl-D-glutamyl-meso-2,6-diaminopimeloyl-D-alanyl-D-alanine + UDP-N-acetyl-alpha-D-glucosamine = di-trans,octa-cis-undecaprenyl diphospho-[N-acetyl-alpha-D-glucosaminyl-(1-&gt;4)]-N-acetyl-alpha-D-muramoyl-L-alanyl-D-glutamyl-meso-2,6-diaminopimeloyl-D-alanyl-D-alanine + UDP + H(+). The protein operates within cell wall biogenesis; peptidoglycan biosynthesis. Cell wall formation. Catalyzes the transfer of a GlcNAc subunit on undecaprenyl-pyrophosphoryl-MurNAc-pentapeptide (lipid intermediate I) to form undecaprenyl-pyrophosphoryl-MurNAc-(pentapeptide)GlcNAc (lipid intermediate II). The sequence is that of UDP-N-acetylglucosamine--N-acetylmuramyl-(pentapeptide) pyrophosphoryl-undecaprenol N-acetylglucosamine transferase from Campylobacter jejuni subsp. jejuni serotype O:2 (strain ATCC 700819 / NCTC 11168).